We begin with the raw amino-acid sequence, 1035 residues long: MAVAPPLPPAPARLLRRWQGSSPWLSSSFGRTRYFSRPAFAAGGRQDYSPSSGMGVSKTGAFRLGLHGNLNVQSSVQEWVDETKRLFFLRTTNNVRNNITNGTTPLRVGNLRHDPSEDIRSSNYPSLYNQRERGPSNSIVNRHVDTDLAKHRVMYQSAHAVPAPFSVANNDIKPLNLLDGSKEEIPWHDSVTVESSLPKVSKSETTLVVDKAIPNKKEHKRITRKVTLNIPDKASLSTESKNARKLLATIYDKVLVVDNVESARSVVKLLTTKYKGFIHACDTEVANIDVKEETPVGHGEVICFSIYSGNSDGEADFGNGKTCIWVDVLDGGRDVLMEFAPFFEDPSIKKVWHNYSFDSHVIENCGIKVAGFHADTMHLARLWDSSRRADGGYSLEGLTNDHRIMNAVLKDIHKTGKVSMKTIFGRKNVRKNGSEGKTISIEPVKKLQREDRELWICYSSLDSMSTLKLYESLKNKLEAKEWIFDGCPRGTMYDFYEEYWRPFGALLVKMETEGMFVDRAYLSEIEKTAVVERKLAADKFRKWASKHCPDAKYMNVNSDNQIRQLFFGGIKNRNKPGETWPQSKAFKVPNDESIATEGKKIPKSRTIKLFTIVEDLKLFTTEGKKTTKTGWLKVRGDVLWSLAGKIPTDHIYKIDDDGQEFDEDGSSVELPEQDIEDTSPYGTAYEAFGGGKKGREACHAIAALCEVFSIDKLISGFIVPLQGDHISCKEGRIHCSLNINTETGRLSARTPSLQNQPALEKDRYKIRQAFVAAPGNTLIVADYGQLELRILAHLTNCKSMLEAFKAGGDFHSRTAMNMYQHVRDAVEEKKVLLEWHPQPGQDKPPVPLLKDAFGAERRKAKMLNFSIAYGKTAVGLSQDWNVEVREARDTLKLWHRDRKEISAWQKKQKALAFEKCEVYTLLGRSRQFPNMTHAGPGQKSHVERAAINAPVQGSAADVAMCAMLEIERNARLKELGWRLLLQVHDEVILEGPTESAEEAKAIVVECMSKPFYGTNILKVDLAVDAKYAKSWYAAK.

The N-terminal 42 residues, 1–42 (MAVAPPLPPAPARLLRRWQGSSPWLSSSFGRTRYFSRPAFAA), are a transit peptide targeting the mitochondrion. Positions 100–124 (TNGTTPLRVGNLRHDPSEDIRSSNY) are disordered. Positions 111-120 (LRHDPSEDIR) are enriched in basic and acidic residues. The region spanning 317-478 (FGNGKTCIWV…LYESLKNKLE (162 aa)) is the 3'-5' exonuclease domain. The polymerase stretch occupies residues 699–1032 (HAIAALCEVF…VDAKYAKSWY (334 aa)).

Belongs to the DNA polymerase type-A family.

It is found in the mitochondrion. The enzyme catalyses DNA(n) + a 2'-deoxyribonucleoside 5'-triphosphate = DNA(n+1) + diphosphate. Its activity is regulated as follows. Not inhibited by aphidicolin. In terms of biological role, in addition to polymerase activity, this DNA polymerase exhibits 5'-3' exonuclease activity. May be required for DNA replication and accumulation in mitochondria. In Oryza sativa subsp. japonica (Rice), this protein is DNA polymerase I B, mitochondrial.